Consider the following 358-residue polypeptide: HTH-type transcriptional regulator IpsA (358 aa).

The region spanning 8–63 is the HTH lacI-type domain; the sequence is GTLASIAAKLGISRTTVSNAYNRPEQLSAELRQRILDTAEDMGYLGPDPVARSLRT. Residues 10 to 29 constitute a DNA-binding region (H-T-H motif); it reads LASIAAKLGISRTTVSNAYN.

Homodimer.

Myo-inositol causes the dissociation of the IpsA-DNA complex in vitro. In terms of biological role, plays a role in the regulation of cell wall biogenesis. Inositol-dependent transcriptional activator of ino1, which encodes inositol phosphate synthase. Also regulates other target genes, which are most likely involved in the synthesis of inositol-derived cell wall components and mycothiol. Acts by binding to a conserved palindromic motif within the promoter regions. The polypeptide is HTH-type transcriptional regulator IpsA (Corynebacterium glutamicum (strain ATCC 13032 / DSM 20300 / JCM 1318 / BCRC 11384 / CCUG 27702 / LMG 3730 / NBRC 12168 / NCIMB 10025 / NRRL B-2784 / 534)).